The following is a 188-amino-acid chain: Phosphoribosylglycinamide formyltransferase (188 aa).

Residue 12–14 (GSN) coordinates N(1)-(5-phospho-beta-D-ribosyl)glycinamide. Residues K66, 91–94 (MRLI), and N108 each bind (6R)-10-formyltetrahydrofolate. Residue H110 is the Proton donor of the active site.

This sequence belongs to the GART family.

The catalysed reaction is N(1)-(5-phospho-beta-D-ribosyl)glycinamide + (6R)-10-formyltetrahydrofolate = N(2)-formyl-N(1)-(5-phospho-beta-D-ribosyl)glycinamide + (6S)-5,6,7,8-tetrahydrofolate + H(+). It participates in purine metabolism; IMP biosynthesis via de novo pathway; N(2)-formyl-N(1)-(5-phospho-D-ribosyl)glycinamide from N(1)-(5-phospho-D-ribosyl)glycinamide (10-formyl THF route): step 1/1. Catalyzes the transfer of a formyl group from 10-formyltetrahydrofolate to 5-phospho-ribosyl-glycinamide (GAR), producing 5-phospho-ribosyl-N-formylglycinamide (FGAR) and tetrahydrofolate. This is Phosphoribosylglycinamide formyltransferase from Staphylococcus aureus (strain Mu50 / ATCC 700699).